We begin with the raw amino-acid sequence, 486 residues long: Katanin p60 ATPase-containing subunit A1 (486 aa).

The disordered stretch occupies residues 103–174 (RSSPLPVRRP…NKAEVSEKEV (72 aa)). Over residues 143–174 (NGDRAKPLKGKEKKEAKPKDDKNKAEVSEKEV) the composition is skewed to basic and acidic residues. Residue 244–251 (GPPGTGKT) participates in ATP binding.

Belongs to the AAA ATPase family. Katanin p60 subunit A1 subfamily. In terms of assembly, can homooligomerize into hexameric rings, which may be promoted by interaction with microtubules. Interacts with katnb1, which may serve as a targeting subunit.

The protein localises to the cytoplasm. It localises to the cytoskeleton. It is found in the microtubule organizing center. Its subcellular location is the centrosome. The protein resides in the spindle pole. The protein localises to the spindle. It carries out the reaction n ATP + n H2O + a microtubule = n ADP + n phosphate + (n+1) alpha/beta tubulin heterodimers.. With respect to regulation, ATPase activity is stimulated by microtubules, which promote homooligomerization. ATP-dependent microtubule severing is stimulated by interaction with katnb1. Functionally, catalytic subunit of a complex which severs microtubules in an ATP-dependent manner. Microtubule severing may promote rapid reorganization of cellular microtubule arrays and the release of microtubules from the centrosome following nucleation. This is Katanin p60 ATPase-containing subunit A1 (katna1) from Salmo salar (Atlantic salmon).